A 250-amino-acid polypeptide reads, in one-letter code: 2,3-bisphosphoglycerate-dependent phosphoglycerate mutase (250 aa).

Substrate-binding positions include 8–15 (RHGESQWN), 21–22 (TG), R60, 87–90 (ERHY), K98, 114–115 (RR), and 183–184 (GN). H9 acts as the Tele-phosphohistidine intermediate in catalysis. E87 functions as the Proton donor/acceptor in the catalytic mechanism.

It belongs to the phosphoglycerate mutase family. BPG-dependent PGAM subfamily. Homodimer.

It carries out the reaction (2R)-2-phosphoglycerate = (2R)-3-phosphoglycerate. The protein operates within carbohydrate degradation; glycolysis; pyruvate from D-glyceraldehyde 3-phosphate: step 3/5. Catalyzes the interconversion of 2-phosphoglycerate and 3-phosphoglycerate. This chain is 2,3-bisphosphoglycerate-dependent phosphoglycerate mutase, found in Bordetella petrii (strain ATCC BAA-461 / DSM 12804 / CCUG 43448).